We begin with the raw amino-acid sequence, 561 residues long: Arf-GAP domain and FG repeat-containing protein 1 (561 aa).

One can recognise an Arf-GAP domain in the interval 11–135 (EKHLKMLRDM…WYVPPEQAKV (125 aa)). The segment at 29–52 (CFDCDQRGPTYVNMTVGSFVCTSC) adopts a C4-type zinc-finger fold. Ser167 bears the Phosphoserine mark. The interval 170-193 (ALHLNKGTPSQSPVVGRSQGQQQE) is disordered. The span at 176–191 (GTPSQSPVVGRSQGQQ) shows a compositional bias: polar residues. Thr177 carries the phosphothreonine modification. Ser181 and Ser362 each carry phosphoserine. O-linked (GlcNAc) serine glycosylation is present at Ser367. The tract at residues 413–433 (SAQTQPASSGPAPFGATPSTN) is disordered.

As to quaternary structure, interacts with FCHO1. Interacts with EPS15R and EPS15. O-glycosylated. As to expression, expressed in the testes (at protein level).

It localises to the nucleus. The protein resides in the cytoplasmic vesicle. Its function is as follows. Required for vesicle docking or fusion during acrosome biogenesis. May play a role in RNA trafficking or localization. This is Arf-GAP domain and FG repeat-containing protein 1 (Agfg1) from Mus musculus (Mouse).